The sequence spans 178 residues: Orotate phosphoribosyltransferase (178 aa).

Residues arginine 92, lysine 93, lysine 96, and 118-126 (EDVTTTGGS) contribute to the 5-phospho-alpha-D-ribose 1-diphosphate site. The orotate site is built by threonine 122 and arginine 150.

This sequence belongs to the purine/pyrimidine phosphoribosyltransferase family. PyrE subfamily. Homodimer. Requires Mg(2+) as cofactor.

It catalyses the reaction orotidine 5'-phosphate + diphosphate = orotate + 5-phospho-alpha-D-ribose 1-diphosphate. Its pathway is pyrimidine metabolism; UMP biosynthesis via de novo pathway; UMP from orotate: step 1/2. Its function is as follows. Catalyzes the transfer of a ribosyl phosphate group from 5-phosphoribose 1-diphosphate to orotate, leading to the formation of orotidine monophosphate (OMP). In Methanosphaera stadtmanae (strain ATCC 43021 / DSM 3091 / JCM 11832 / MCB-3), this protein is Orotate phosphoribosyltransferase.